The chain runs to 430 residues: Adenylosuccinate synthetase (430 aa).

GTP is bound by residues 12–18 (GDEGKGK) and 40–42 (GHT). D13 serves as the catalytic Proton acceptor. Positions 13 and 40 each coordinate Mg(2+). Residues 13–16 (DEGK), 38–41 (NAGH), T128, R142, Q223, T238, and R302 contribute to the IMP site. The active-site Proton donor is H41. 298 to 304 (TTTGRPR) is a binding site for substrate. GTP-binding positions include R304, 330 to 332 (SID), and 413 to 415 (SVG).

The protein belongs to the adenylosuccinate synthetase family. In terms of assembly, homodimer. It depends on Mg(2+) as a cofactor.

Its subcellular location is the cytoplasm. It catalyses the reaction IMP + L-aspartate + GTP = N(6)-(1,2-dicarboxyethyl)-AMP + GDP + phosphate + 2 H(+). It participates in purine metabolism; AMP biosynthesis via de novo pathway; AMP from IMP: step 1/2. Functionally, plays an important role in the de novo pathway of purine nucleotide biosynthesis. Catalyzes the first committed step in the biosynthesis of AMP from IMP. The chain is Adenylosuccinate synthetase from Lactococcus lactis subsp. cremoris (strain MG1363).